The primary structure comprises 266 residues: MDTLQVIILALIQGLTEFLPISSSAHLILPAQLFGWEDQGLSFDVAVHIGSLAAVVIYFRNEILAMLKAWLASIFRGQQSDDSKLAWWIILATIPAIGVGFTAKDMVETHLRGPGVIAITTVIFGLLLWFADRIAKDEMTEYQTGWRKALLIGVAQALALIPGTSRSGITITAALMLGLKREAAARFSFLMSIPVILGAALLMTKDIITENHVVDWHALALGSILSFIAAYACIYFFLKIISRMGMTPFVIYRIALGVFLCGFIYL.

The next 8 membrane-spanning stretches (helical) occupy residues 1-21 (MDTL…FLPI), 39-59 (QGLS…VIYF), 83-103 (SKLA…GFTA), 111-131 (LRGP…LWFA), 149-169 (ALLI…RSGI), 183-203 (AAAR…ALLM), 218-238 (ALAL…YFFL), and 246-266 (MTPF…FIYL).

Belongs to the UppP family.

The protein resides in the cell inner membrane. The enzyme catalyses di-trans,octa-cis-undecaprenyl diphosphate + H2O = di-trans,octa-cis-undecaprenyl phosphate + phosphate + H(+). In terms of biological role, catalyzes the dephosphorylation of undecaprenyl diphosphate (UPP). Confers resistance to bacitracin. This Shewanella amazonensis (strain ATCC BAA-1098 / SB2B) protein is Undecaprenyl-diphosphatase.